We begin with the raw amino-acid sequence, 186 residues long: dCTP deaminase (186 aa).

Lysine 107–arginine 112 serves as a coordination point for dCTP. Catalysis depends on glutamate 133, which acts as the Proton donor/acceptor. Positions 152, 166, and 176 each coordinate dCTP.

The protein belongs to the dCTP deaminase family. As to quaternary structure, homotrimer.

The catalysed reaction is dCTP + H2O + H(+) = dUTP + NH4(+). The protein operates within pyrimidine metabolism; dUMP biosynthesis; dUMP from dCTP (dUTP route): step 1/2. In terms of biological role, catalyzes the deamination of dCTP to dUTP. The chain is dCTP deaminase from Campylobacter concisus (strain 13826).